The following is a 401-amino-acid chain: Probable tRNA sulfurtransferase (401 aa).

In terms of domain architecture, THUMP spans 60–165 (EPIIEKLKTV…QDGTYVTCRD (106 aa)). Residues 183 to 184 (ML), 208 to 209 (HF), Arg265, Gly287, and Gln296 each bind ATP.

It belongs to the ThiI family.

Its subcellular location is the cytoplasm. The catalysed reaction is [ThiI sulfur-carrier protein]-S-sulfanyl-L-cysteine + a uridine in tRNA + 2 reduced [2Fe-2S]-[ferredoxin] + ATP + H(+) = [ThiI sulfur-carrier protein]-L-cysteine + a 4-thiouridine in tRNA + 2 oxidized [2Fe-2S]-[ferredoxin] + AMP + diphosphate. It carries out the reaction [ThiS sulfur-carrier protein]-C-terminal Gly-Gly-AMP + S-sulfanyl-L-cysteinyl-[cysteine desulfurase] + AH2 = [ThiS sulfur-carrier protein]-C-terminal-Gly-aminoethanethioate + L-cysteinyl-[cysteine desulfurase] + A + AMP + 2 H(+). The protein operates within cofactor biosynthesis; thiamine diphosphate biosynthesis. Catalyzes the ATP-dependent transfer of a sulfur to tRNA to produce 4-thiouridine in position 8 of tRNAs, which functions as a near-UV photosensor. Also catalyzes the transfer of sulfur to the sulfur carrier protein ThiS, forming ThiS-thiocarboxylate. This is a step in the synthesis of thiazole, in the thiamine biosynthesis pathway. The sulfur is donated as persulfide by IscS. This is Probable tRNA sulfurtransferase from Geobacillus kaustophilus (strain HTA426).